The chain runs to 212 residues: Large ribosomal subunit protein uL3 (212 aa).

This sequence belongs to the universal ribosomal protein uL3 family. Part of the 50S ribosomal subunit. Forms a cluster with proteins L14 and L19.

Its function is as follows. One of the primary rRNA binding proteins, it binds directly near the 3'-end of the 23S rRNA, where it nucleates assembly of the 50S subunit. In Acetivibrio thermocellus (strain ATCC 27405 / DSM 1237 / JCM 9322 / NBRC 103400 / NCIMB 10682 / NRRL B-4536 / VPI 7372) (Clostridium thermocellum), this protein is Large ribosomal subunit protein uL3.